Here is a 233-residue protein sequence, read N- to C-terminus: Large ribosomal subunit protein uL1 (233 aa).

Belongs to the universal ribosomal protein uL1 family. In terms of assembly, part of the 50S ribosomal subunit.

Its function is as follows. Binds directly to 23S rRNA. The L1 stalk is quite mobile in the ribosome, and is involved in E site tRNA release. Functionally, protein L1 is also a translational repressor protein, it controls the translation of the L11 operon by binding to its mRNA. This Polynucleobacter necessarius subsp. necessarius (strain STIR1) protein is Large ribosomal subunit protein uL1.